We begin with the raw amino-acid sequence, 49 residues long: Large ribosomal subunit protein bL33C (49 aa).

The segment at 20 to 49 is disordered; sequence NKNKRNNPDRLEKQKYCPRERKVTLHRETK. The segment covering 25-49 has biased composition (basic and acidic residues); sequence NNPDRLEKQKYCPRERKVTLHRETK.

The protein belongs to the bacterial ribosomal protein bL33 family.

This Enterococcus faecalis (strain ATCC 700802 / V583) protein is Large ribosomal subunit protein bL33C (rpmG3).